The chain runs to 574 residues: Ankyrin repeat protein B19 (574 aa).

ANK repeat units follow at residues Thr56–Met87, Ile135–Phe164, Asp167–Ala213, Cys217–Ile249, His253–Glu285, and Glu327–Ala356. One can recognise an F-box domain in the interval Asn541 to Val574.

This sequence belongs to the poxvirinae B18 protein family.

The sequence is that of Ankyrin repeat protein B19 from Vaccinia virus (strain Western Reserve) (VACV).